The sequence spans 221 residues: Phosphoribosylformylglycinamidine synthase subunit PurQ (221 aa).

The region spanning 8-221 (NVGIIRFPGT…GLKFFKSFLD (214 aa)) is the Glutamine amidotransferase type-1 domain. Catalysis depends on cysteine 91, which acts as the Nucleophile. Catalysis depends on residues histidine 198 and glutamate 200.

As to quaternary structure, part of the FGAM synthase complex composed of 1 PurL, 1 PurQ and 2 PurS subunits.

Its subcellular location is the cytoplasm. It carries out the reaction N(2)-formyl-N(1)-(5-phospho-beta-D-ribosyl)glycinamide + L-glutamine + ATP + H2O = 2-formamido-N(1)-(5-O-phospho-beta-D-ribosyl)acetamidine + L-glutamate + ADP + phosphate + H(+). The enzyme catalyses L-glutamine + H2O = L-glutamate + NH4(+). It functions in the pathway purine metabolism; IMP biosynthesis via de novo pathway; 5-amino-1-(5-phospho-D-ribosyl)imidazole from N(2)-formyl-N(1)-(5-phospho-D-ribosyl)glycinamide: step 1/2. In terms of biological role, part of the phosphoribosylformylglycinamidine synthase complex involved in the purines biosynthetic pathway. Catalyzes the ATP-dependent conversion of formylglycinamide ribonucleotide (FGAR) and glutamine to yield formylglycinamidine ribonucleotide (FGAM) and glutamate. The FGAM synthase complex is composed of three subunits. PurQ produces an ammonia molecule by converting glutamine to glutamate. PurL transfers the ammonia molecule to FGAR to form FGAM in an ATP-dependent manner. PurS interacts with PurQ and PurL and is thought to assist in the transfer of the ammonia molecule from PurQ to PurL. The sequence is that of Phosphoribosylformylglycinamidine synthase subunit PurQ from Methanosphaera stadtmanae (strain ATCC 43021 / DSM 3091 / JCM 11832 / MCB-3).